A 223-amino-acid polypeptide reads, in one-letter code: MNIAKLIDHTILKANTTKEDVMKVIEEAKEYKFASVCINPPWVKLAADELAGHDVDVCTVIGFPLGASTTETKAFETKDAIAKGATEVDMVINVGALKDGDNELVEKDIYEVVQAAKGKALVKVIIETCLLTDEEKVRACELSVKAGADFVKTSTGFSTGGATAEDIALMRKTVGPNVGVKASGGVRTREDADKMVAAGASRVGASASVAIVLNDAKGATDNY.

D89 serves as the catalytic Proton donor/acceptor. K152 serves as the catalytic Schiff-base intermediate with acetaldehyde. Catalysis depends on K181, which acts as the Proton donor/acceptor.

The protein belongs to the DeoC/FbaB aldolase family. DeoC type 1 subfamily.

The protein localises to the cytoplasm. It carries out the reaction 2-deoxy-D-ribose 5-phosphate = D-glyceraldehyde 3-phosphate + acetaldehyde. It participates in carbohydrate degradation; 2-deoxy-D-ribose 1-phosphate degradation; D-glyceraldehyde 3-phosphate and acetaldehyde from 2-deoxy-alpha-D-ribose 1-phosphate: step 2/2. Functionally, catalyzes a reversible aldol reaction between acetaldehyde and D-glyceraldehyde 3-phosphate to generate 2-deoxy-D-ribose 5-phosphate. In Bacillus cereus (strain ATCC 14579 / DSM 31 / CCUG 7414 / JCM 2152 / NBRC 15305 / NCIMB 9373 / NCTC 2599 / NRRL B-3711), this protein is Deoxyribose-phosphate aldolase.